The following is a 101-amino-acid chain: Small ribosomal subunit protein uS14 (101 aa).

Belongs to the universal ribosomal protein uS14 family. Part of the 30S ribosomal subunit. Contacts proteins S3 and S10.

Binds 16S rRNA, required for the assembly of 30S particles and may also be responsible for determining the conformation of the 16S rRNA at the A site. The protein is Small ribosomal subunit protein uS14 of Synechococcus sp. (strain JA-2-3B'a(2-13)) (Cyanobacteria bacterium Yellowstone B-Prime).